The following is a 60-amino-acid chain: UPF0509 protein Ent638_2183 (60 aa).

It belongs to the UPF0509 family.

This chain is UPF0509 protein Ent638_2183, found in Enterobacter sp. (strain 638).